Reading from the N-terminus, the 240-residue chain is 1-(5-phosphoribosyl)-5-[(5-phosphoribosylamino)methylideneamino] imidazole-4-carboxamide isomerase (240 aa).

Aspartate 8 functions as the Proton acceptor in the catalytic mechanism. Aspartate 129 acts as the Proton donor in catalysis.

It belongs to the HisA/HisF family.

It is found in the cytoplasm. The catalysed reaction is 1-(5-phospho-beta-D-ribosyl)-5-[(5-phospho-beta-D-ribosylamino)methylideneamino]imidazole-4-carboxamide = 5-[(5-phospho-1-deoxy-D-ribulos-1-ylimino)methylamino]-1-(5-phospho-beta-D-ribosyl)imidazole-4-carboxamide. It functions in the pathway amino-acid biosynthesis; L-histidine biosynthesis; L-histidine from 5-phospho-alpha-D-ribose 1-diphosphate: step 4/9. The protein is 1-(5-phosphoribosyl)-5-[(5-phosphoribosylamino)methylideneamino] imidazole-4-carboxamide isomerase of Clostridioides difficile (strain 630) (Peptoclostridium difficile).